Here is a 253-residue protein sequence, read N- to C-terminus: MTDIFARRATLARSVRLLSQFRYERSEPARFYGALAADTAAMVDDLWRAGHGESAAGRTLLDVGGGPGYFAAAFADAGVRYLGVEPDPGEMHAAGPVVAADTGTFVRASGMALPFADDSVDICLSSNVAEHVPRPWQLGAEMLRVTRPGGLAVLSYTVWLGPFGGHEMGLTHYLGGSRAAARYARKHGHPAKNNYGSSLFEVSVADGLAWAACTGAELAAFPRYHPRWAWWLTSVPVLREFLVSNLVLVLQPQ.

Belongs to the methyltransferase superfamily.

This is an uncharacterized protein from Mycobacterium avium (strain 104).